A 258-amino-acid polypeptide reads, in one-letter code: DNA repair protein RecO (258 aa).

The protein belongs to the RecO family.

Involved in DNA repair and RecF pathway recombination. The chain is DNA repair protein RecO from Syntrophotalea carbinolica (strain DSM 2380 / NBRC 103641 / GraBd1) (Pelobacter carbinolicus).